Reading from the N-terminus, the 147-residue chain is Hemoglobin subunit beta (147 aa).

Val2 carries the post-translational modification N-acetylvaline. One can recognise a Globin domain in the interval 3 to 147 (HLSAEEKEAV…VANALAHKYH (145 aa)). Phosphoserine is present on Ser45. The residue at position 60 (Lys60) is an N6-acetyllysine. His64 is a binding site for heme b. Lys83 carries the N6-acetyllysine modification. Residue His93 participates in heme b binding. An S-nitrosocysteine modification is found at Cys94. Lys145 is modified (N6-acetyllysine).

This sequence belongs to the globin family. In terms of assembly, heterotetramer of two alpha chains and two beta chains. In terms of tissue distribution, red blood cells.

Functionally, involved in oxygen transport from the lung to the various peripheral tissues. The sequence is that of Hemoglobin subunit beta (HBB) from Sus scrofa (Pig).